A 406-amino-acid chain; its full sequence is Copper transport protein CTR1 (406 aa).

Residues 1–152 are Cytoplasmic-facing; the sequence is MEGMNMGSSM…HHLHANNSGK (152 aa). 3 tandem repeats follow at residues 9 to 27, 28 to 46, and 47 to 65. Residues 9–65 form a 3 X 19 AA tandem repeats of S-M-X-M-X-A-M-S-S-A-S-K-T-X-X-S-X-M-X region; it reads SMNMDAMSSASKTVASSMASMSMDAMSSASKTILSSMSSMSMEAMSSASKTLASTMS. The segment at 71-117 is disordered; sequence SMGSSSMSGMSMSMSSTPTSSASAQTTSDSSMSGMSGMSSSDNSSSS. A helical membrane pass occupies residues 153–173; that stretch reads AFGIFLLFVVAAFVYKLLLFV. Residues 174 to 250 are Extracellular-facing; that stretch reads SWCLEVHWFK…RAFLVFTSTM (77 aa). Residues 251-271 traverse the membrane as a helical segment; it reads IIYMLMLATMSFVLTYVFAVI. At 272–406 the chain is on the cytoplasmic side; it reads TGLALSEVFF…LLPAEKFTHN (135 aa). Residues 304–315 carry the REP-III motif; that stretch reads CPGFGNCQCGRH. Residues 318 to 406 form a disordered region; sequence PSPDPIAVAD…LLPAEKFTHN (89 aa). Phosphoserine is present on Ser344. Lys345 is covalently cross-linked (Glycyl lysine isopeptide (Lys-Gly) (interchain with G-Cter in ubiquitin)). Ser349 carries the post-translational modification Phosphoserine. Polar residues-rich tracts occupy residues 349–375 and 384–395; these read SENNQKKTPTQEEGCNCATDSGKNQAN and SKLQEQSGNMDQ. Position 356 is a phosphothreonine (Thr356). The residue at position 369 (Ser369) is a Phosphoserine.

In terms of assembly, homooligomer. In terms of processing, extensively O-glycosylated.

It is found in the cell membrane. The catalysed reaction is Cu(2+)(in) = Cu(2+)(out). Functionally, high-affinity copper transporter of plasma membrane that mediates copper uptake under low copper conditions. Copper transport through the high affinity system requiring CTRl supplies the iron transport multicopper ferroxidase FET3 with copper, which in turn is required for ferrous iron uptake. The energy for translocation is unlikely to be directly derived from ATP hydrolysis and the exact mechanism driving the transmembrane transport of copper has still to be determined. Binds 4 copper ions via its C-terminal cystein-rich domain and is able to deliver Cu(I) directly to both the chaperone ATX1 and to an N-terminal domain of the CCC2 protein. Also able to mediate the uptake of the anticancer drug cisplatin. The protein is Copper transport protein CTR1 of Saccharomyces cerevisiae (strain ATCC 204508 / S288c) (Baker's yeast).